We begin with the raw amino-acid sequence, 151 residues long: Ribosome maturation factor RimP (151 aa).

Belongs to the RimP family.

It localises to the cytoplasm. Required for maturation of 30S ribosomal subunits. This is Ribosome maturation factor RimP from Haemophilus influenzae (strain PittEE).